Consider the following 708-residue polypeptide: Ion-translocating oxidoreductase complex subunit C (708 aa).

4Fe-4S ferredoxin-type domains follow at residues 369–397 (GEPQ…QQLY) and 407–436 (KATT…VQYF). Cysteine 377, cysteine 380, cysteine 383, cysteine 387, cysteine 416, cysteine 419, cysteine 422, and cysteine 426 together coordinate [4Fe-4S] cluster. The interval 663-684 (KARKLEQQQTNAEPEEQVDPRK) is disordered.

This sequence belongs to the 4Fe4S bacterial-type ferredoxin family. RnfC subfamily. The complex is composed of six subunits: RsxA, RsxB, RsxC, RsxD, RsxE and RsxG. [4Fe-4S] cluster serves as cofactor.

Its subcellular location is the cell inner membrane. Its function is as follows. Part of a membrane-bound complex that couples electron transfer with translocation of ions across the membrane. Required to maintain the reduced state of SoxR. The protein is Ion-translocating oxidoreductase complex subunit C of Shigella boydii serotype 18 (strain CDC 3083-94 / BS512).